The sequence spans 165 residues: Nascent polypeptide-associated complex subunit alpha (165 aa).

The NAC-A/B domain occupies 14–78; the sequence is NRNEKKAREL…AKVDNFTQRL (65 aa). Positions 126–165 constitute a UBA domain; sequence LSNDDIDLVVQQTNATKGQAIKALKEHNGDIVNAIMSLSK.

Belongs to the NAC-alpha family. Part of the nascent polypeptide-associated complex (NAC), consisting of EGD2 and EGD1. NAC associates with ribosomes via EGD1.

The protein localises to the cytoplasm. It is found in the nucleus. Its function is as follows. Component of the nascent polypeptide-associated complex (NAC), a dynamic component of the ribosomal exit tunnel, protecting the emerging polypeptides from interaction with other cytoplasmic proteins to ensure appropriate nascent protein targeting. The NAC complex also promotes mitochondrial protein import by enhancing productive ribosome interactions with the outer mitochondrial membrane and blocks the inappropriate interaction of ribosomes translating non-secretory nascent polypeptides with translocation sites in the membrane of the endoplasmic reticulum. EGD2 may also be involved in transcription regulation. In Candida glabrata (strain ATCC 2001 / BCRC 20586 / JCM 3761 / NBRC 0622 / NRRL Y-65 / CBS 138) (Yeast), this protein is Nascent polypeptide-associated complex subunit alpha (EGD2).